Reading from the N-terminus, the 253-residue chain is Pimeloyl-[acyl-carrier protein] methyl ester esterase (253 aa).

Substrate-binding positions include tryptophan 18, 78–79 (SL), and 139–143 (FLALD). Serine 78 functions as the Nucleophile in the catalytic mechanism. Active-site residues include aspartate 203 and histidine 231. Position 231 (histidine 231) interacts with substrate.

Belongs to the AB hydrolase superfamily. Carboxylesterase BioH family. Monomer.

Its subcellular location is the cytoplasm. It carries out the reaction 6-carboxyhexanoyl-[ACP] methyl ester + H2O = 6-carboxyhexanoyl-[ACP] + methanol + H(+). The protein operates within cofactor biosynthesis; biotin biosynthesis. In terms of biological role, the physiological role of BioH is to remove the methyl group introduced by BioC when the pimeloyl moiety is complete. It allows to synthesize pimeloyl-ACP via the fatty acid synthetic pathway through the hydrolysis of the ester bonds of pimeloyl-ACP esters. This chain is Pimeloyl-[acyl-carrier protein] methyl ester esterase, found in Xanthomonas campestris pv. campestris (strain 8004).